The following is a 251-amino-acid chain: Osmotin-like protein (251 aa).

The N-terminal stretch at 1 to 21 (MSHLTTFLVFFLLAFVTYTYA) is a signal peptide. 8 disulfides stabilise this stretch: Cys-31–Cys-226, Cys-73–Cys-83, Cys-88–Cys-94, Cys-142–Cys-214, Cys-147–Cys-197, Cys-155–Cys-165, Cys-169–Cys-178, and Cys-179–Cys-184. A glycan (N-linked (GlcNAc...) asparagine) is linked at Asn-233.

This sequence belongs to the thaumatin family.

This Nicotiana tabacum (Common tobacco) protein is Osmotin-like protein (OLPA).